The following is a 462-amino-acid chain: ATP synthase subunit beta (462 aa).

151–158 (GGAGVGKT) is a binding site for ATP.

It belongs to the ATPase alpha/beta chains family. F-type ATPases have 2 components, CF(1) - the catalytic core - and CF(0) - the membrane proton channel. CF(1) has five subunits: alpha(3), beta(3), gamma(1), delta(1), epsilon(1). CF(0) has four main subunits: a(1), b(1), b'(1) and c(9-12).

The protein resides in the cell inner membrane. It carries out the reaction ATP + H2O + 4 H(+)(in) = ADP + phosphate + 5 H(+)(out). Its function is as follows. Produces ATP from ADP in the presence of a proton gradient across the membrane. The catalytic sites are hosted primarily by the beta subunits. This is ATP synthase subunit beta from Chlorobium limicola (strain DSM 245 / NBRC 103803 / 6330).